A 445-amino-acid polypeptide reads, in one-letter code: Methionine aminopeptidase 2 (445 aa).

Positions M1 to L89 are disordered. The segment covering A60–N74 has biased composition (basic residues). Residue H198 participates in substrate binding. A divalent metal cation contacts are provided by D218, D229, and H298. Residue H306 coordinates substrate. 2 residues coordinate a divalent metal cation: E331 and E426.

It belongs to the peptidase M24A family. Methionine aminopeptidase eukaryotic type 2 subfamily. Requires Co(2+) as cofactor. Zn(2+) serves as cofactor. The cofactor is Mn(2+). It depends on Fe(2+) as a cofactor.

It is found in the cytoplasm. It carries out the reaction Release of N-terminal amino acids, preferentially methionine, from peptides and arylamides.. Its function is as follows. Cotranslationally removes the N-terminal methionine from nascent proteins. The N-terminal methionine is often cleaved when the second residue in the primary sequence is small and uncharged (Met-Ala-, Cys, Gly, Pro, Ser, Thr, or Val). This chain is Methionine aminopeptidase 2, found in Podospora anserina (strain S / ATCC MYA-4624 / DSM 980 / FGSC 10383) (Pleurage anserina).